The primary structure comprises 98 residues: Feather keratin 2 (98 aa).

N-acetylserine is present on Ser-2.

This sequence belongs to the avian keratin family. In terms of assembly, the avian keratins (F-ker, S-ker, C-ker and B-ker) are a complex mixture of very similar polypeptides.

This is Feather keratin 2 from Gallus gallus (Chicken).